Consider the following 691-residue polypeptide: DNA ligase (691 aa).

Residues aspartate 53–aspartate 57, serine 102–leucine 103, and glutamate 135 contribute to the NAD(+) site. Lysine 137 (N6-AMP-lysine intermediate) is an active-site residue. The NAD(+) site is built by arginine 158, glutamate 195, lysine 310, and lysine 334. Residues cysteine 428, cysteine 431, cysteine 446, and cysteine 452 each contribute to the Zn(2+) site. The BRCT domain maps to serine 613–glutamate 691.

It belongs to the NAD-dependent DNA ligase family. LigA subfamily. Mg(2+) serves as cofactor. It depends on Mn(2+) as a cofactor.

It catalyses the reaction NAD(+) + (deoxyribonucleotide)n-3'-hydroxyl + 5'-phospho-(deoxyribonucleotide)m = (deoxyribonucleotide)n+m + AMP + beta-nicotinamide D-nucleotide.. In terms of biological role, DNA ligase that catalyzes the formation of phosphodiester linkages between 5'-phosphoryl and 3'-hydroxyl groups in double-stranded DNA using NAD as a coenzyme and as the energy source for the reaction. It is essential for DNA replication and repair of damaged DNA. In Psychrobacter arcticus (strain DSM 17307 / VKM B-2377 / 273-4), this protein is DNA ligase.